The following is a 262-amino-acid chain: MRERLRHCKRVIIKVGTSTLTHPGGHLHLGRMEALVRQIADLHFEGRQVILVTSGAVGAGLGRLGLAERPAEVAAKQALAAVGQGLLMQRYEGLFSEYGLVVGQVLLTREDLEDPDRRASSAQVMERLLAWGVIPIVNENDTVTSEEIRVGDNDTLSARVAALVRADLLILLSDVDGLYPADPHLHPGLSPIPWVSPDDDLDRFAGGPGSANGTGGMVTKVAAARICAEHGIPMVLACGERPDVLRQILAGEEIGTLFSREG.

ATP is bound at residue lysine 14. Serine 54, aspartate 141, and asparagine 153 together coordinate substrate. Residues 173-174 (SD) and 214-220 (TGGMVTK) each bind ATP.

It belongs to the glutamate 5-kinase family.

It is found in the cytoplasm. It catalyses the reaction L-glutamate + ATP = L-glutamyl 5-phosphate + ADP. It functions in the pathway amino-acid biosynthesis; L-proline biosynthesis; L-glutamate 5-semialdehyde from L-glutamate: step 1/2. Functionally, catalyzes the transfer of a phosphate group to glutamate to form L-glutamate 5-phosphate. This Symbiobacterium thermophilum (strain DSM 24528 / JCM 14929 / IAM 14863 / T) protein is Glutamate 5-kinase.